The chain runs to 908 residues: Alanine--tRNA ligase (908 aa).

Zn(2+)-binding residues include histidine 588, histidine 592, cysteine 691, and histidine 695.

Belongs to the class-II aminoacyl-tRNA synthetase family. Zn(2+) is required as a cofactor.

It is found in the cytoplasm. The enzyme catalyses tRNA(Ala) + L-alanine + ATP = L-alanyl-tRNA(Ala) + AMP + diphosphate. Functionally, catalyzes the attachment of alanine to tRNA(Ala) in a two-step reaction: alanine is first activated by ATP to form Ala-AMP and then transferred to the acceptor end of tRNA(Ala). Also edits incorrectly charged Ser-tRNA(Ala) and Gly-tRNA(Ala) via its editing domain. This is Alanine--tRNA ligase from Mycobacterium leprae (strain TN).